Reading from the N-terminus, the 345-residue chain is NADH-quinone oxidoreductase subunit 8 (345 aa).

A run of 8 helical transmembrane segments spans residues Met-15–Tyr-35, Phe-82–Ile-102, Val-115–Gly-135, Leu-161–Val-181, Leu-190–Leu-210, Tyr-240–Phe-262, Trp-278–Val-298, and Ile-309–Ala-329.

It belongs to the complex I subunit 1 family. NDH-1 is composed of at least 14 different subunits, Nqo1 to Nqo14. The complex has a L-shaped structure, with the hydrophobic arm (subunits Nqo7, Nqo8, Nqo10 to Nqo14) embedded in the inner membrane and the hydrophilic peripheral arm (subunits Nqo1 to Nqo6, Nqo9) protruding into the bacterial cytoplasm. The hydrophilic domain contains all the redox centers.

Its subcellular location is the cell inner membrane. It carries out the reaction a quinone + NADH + 5 H(+)(in) = a quinol + NAD(+) + 4 H(+)(out). Functionally, NDH-1 shuttles electrons from NADH, via FMN and iron-sulfur (Fe-S) centers, to quinones in the respiratory chain. The immediate electron acceptor for the enzyme in this species is believed to be ubiquinone. Couples the redox reaction to proton translocation (for every two electrons transferred, four hydrogen ions are translocated across the cytoplasmic membrane), and thus conserves the redox energy in a proton gradient. The polypeptide is NADH-quinone oxidoreductase subunit 8 (Paracoccus denitrificans).